Here is a 98-residue protein sequence, read N- to C-terminus: Co-chaperonin GroES (98 aa).

The disordered stretch occupies residues 32-56; that stretch reads NAKEKPQQGEVLAVGPGRRDDEGKR.

This sequence belongs to the GroES chaperonin family. In terms of assembly, heptamer of 7 subunits arranged in a ring. Interacts with the chaperonin GroEL.

It localises to the cytoplasm. Together with the chaperonin GroEL, plays an essential role in assisting protein folding. The GroEL-GroES system forms a nano-cage that allows encapsulation of the non-native substrate proteins and provides a physical environment optimized to promote and accelerate protein folding. GroES binds to the apical surface of the GroEL ring, thereby capping the opening of the GroEL channel. The polypeptide is Co-chaperonin GroES (Bifidobacterium animalis subsp. lactis (strain AD011)).